Consider the following 431-residue polypeptide: 4-hydroxy-3-methylbut-2-en-1-yl diphosphate synthase (flavodoxin) (431 aa).

4 residues coordinate [4Fe-4S] cluster: Cys310, Cys313, Cys356, and Glu363.

This sequence belongs to the IspG family. Requires [4Fe-4S] cluster as cofactor.

It catalyses the reaction (2E)-4-hydroxy-3-methylbut-2-enyl diphosphate + oxidized [flavodoxin] + H2O + 2 H(+) = 2-C-methyl-D-erythritol 2,4-cyclic diphosphate + reduced [flavodoxin]. Its pathway is isoprenoid biosynthesis; isopentenyl diphosphate biosynthesis via DXP pathway; isopentenyl diphosphate from 1-deoxy-D-xylulose 5-phosphate: step 5/6. In terms of biological role, converts 2C-methyl-D-erythritol 2,4-cyclodiphosphate (ME-2,4cPP) into 1-hydroxy-2-methyl-2-(E)-butenyl 4-diphosphate. This Rhodopseudomonas palustris (strain HaA2) protein is 4-hydroxy-3-methylbut-2-en-1-yl diphosphate synthase (flavodoxin).